A 226-amino-acid polypeptide reads, in one-letter code: Myosin regulatory light chain 10 (226 aa).

EF-hand domains follow at residues 84–119, 154–189, and 190–225; these read NSPA…LGRI, DPEE…QADR, and FSEE…GEEK. Positions 97, 99, 101, and 108 each coordinate Ca(2+).

Myosin is a hexamer of 2 heavy chains and 4 light chains.

This is Myosin regulatory light chain 10 (MYL10) from Homo sapiens (Human).